The chain runs to 122 residues: Large ribosomal subunit protein uL14c (122 aa).

This sequence belongs to the universal ribosomal protein uL14 family. As to quaternary structure, part of the 50S ribosomal subunit.

The protein resides in the plastid. The protein localises to the chloroplast. Binds to 23S rRNA. This is Large ribosomal subunit protein uL14c from Fagopyrum esculentum subsp. ancestrale (Wild buckwheat).